Here is a 692-residue protein sequence, read N- to C-terminus: DNA repair protein RAD34 (692 aa).

Residues 1-38 (MAKRLLESSQNDQANRKNSKIEKKEVSFYEEEETDDSF) form a disordered region. Residues 28–38 (FYEEEETDDSF) show a composition bias toward acidic residues.

This sequence belongs to the XPC family.

The protein localises to the nucleus. Its function is as follows. Involved in nucleotide excision repair (NER) of damaged ribosomal DNA (rDNA). Required for the repair of the RNA polymerase I-transcribed strand of rDNA. This chain is DNA repair protein RAD34 (RAD34), found in Saccharomyces cerevisiae (strain ATCC 204508 / S288c) (Baker's yeast).